Here is a 373-residue protein sequence, read N- to C-terminus: Dynein regulatory complex protein 9 (373 aa).

Residues 145–200 (EQAMKETIEREKNTTAAVRQLRNDLREEKLDHEEKMKEKKKGLSTLKEQLKALKMD) adopt a coiled-coil conformation. One can recognise an IQ domain in the interval 336–365 (RAQAAVIIQAWWRGHKVRMVMSGGGKKGAK).

Belongs to the DRC9 family. Component of the nexin-dynein regulatory complex (N-DRC).

The protein localises to the cytoplasm. It is found in the cytoskeleton. It localises to the flagellum axoneme. Its function is as follows. Component of the nexin-dynein regulatory complex (N-DRC), a key regulator of ciliary/flagellar motility which maintains the alignment and integrity of the distal axoneme and regulates microtubule sliding in motile axonemes. This chain is Dynein regulatory complex protein 9, found in Chlamydomonas reinhardtii (Chlamydomonas smithii).